The following is a 111-amino-acid chain: uncharacterized protein (111 aa).

Residues 43–72 (NGRAEETEADAPLPEEPSLPDLPDLSDLDS) form a disordered region. A compositionally biased stretch (low complexity) spans 61 to 72 (LPDLPDLSDLDS).

This is an uncharacterized protein from Homo sapiens (Human).